Reading from the N-terminus, the 342-residue chain is 11-beta-hydroxysteroid dehydrogenase-like 6 (342 aa).

The helical; Signal-anchor for type II membrane protein transmembrane segment at 10-30 (FLFPLLTLYALLVFYPTYQRL) threads the bilayer. NADP(+) is bound by residues 54–80 (GAASGIGEALAYEYGKRGAYLALVDIR) and Asp105. Residue Ser184 participates in substrate binding. The Proton acceptor role is filled by Tyr197. Residues 197 to 201 (YCASK) and Lys201 each bind NADP(+).

This sequence belongs to the short-chain dehydrogenases/reductases (SDR) family.

The protein localises to the membrane. This chain is 11-beta-hydroxysteroid dehydrogenase-like 6 (HSD6), found in Arabidopsis thaliana (Mouse-ear cress).